Here is a 780-residue protein sequence, read N- to C-terminus: Alpha-xylosidase (780 aa).

4 N-linked (GlcNAc...) asparagine glycosylation sites follow: asparagine 48, asparagine 84, asparagine 247, and asparagine 298. Active-site residues include aspartate 434 and glutamate 437. Asparagine 443 carries N-linked (GlcNAc...) asparagine glycosylation. The Proton donor role is filled by aspartate 501. An N-linked (GlcNAc...) asparagine glycan is attached at asparagine 718.

Belongs to the glycosyl hydrolase 31 family.

The protein localises to the secreted. The enzyme catalyses Hydrolysis of terminal, non-reducing alpha-D-xylose residues with release of alpha-D-xylose.. In terms of biological role, catalyzes the liberation of alpha-xylose from the non-reducing terminal glucose of xyloglucan oligosaccharides. The chain is Alpha-xylosidase from Emericella nidulans (strain FGSC A4 / ATCC 38163 / CBS 112.46 / NRRL 194 / M139) (Aspergillus nidulans).